The sequence spans 407 residues: CCA-adding enzyme (407 aa).

ATP-binding residues include Gly-32 and Arg-35. The CTP site is built by Gly-32 and Arg-35. Residues Asp-45 and Asp-47 each coordinate Mg(2+). Positions 116, 159, 162, 165, and 168 each coordinate ATP. Arg-116, Asp-159, Arg-162, Arg-165, and Arg-168 together coordinate CTP.

It belongs to the tRNA nucleotidyltransferase/poly(A) polymerase family. Bacterial CCA-adding enzyme type 3 subfamily. Homodimer. Mg(2+) serves as cofactor.

It catalyses the reaction a tRNA precursor + 2 CTP + ATP = a tRNA with a 3' CCA end + 3 diphosphate. The catalysed reaction is a tRNA with a 3' CCA end + 2 CTP + ATP = a tRNA with a 3' CCACCA end + 3 diphosphate. In terms of biological role, catalyzes the addition and repair of the essential 3'-terminal CCA sequence in tRNAs without using a nucleic acid template. Adds these three nucleotides in the order of C, C, and A to the tRNA nucleotide-73, using CTP and ATP as substrates and producing inorganic pyrophosphate. tRNA 3'-terminal CCA addition is required both for tRNA processing and repair. Also involved in tRNA surveillance by mediating tandem CCA addition to generate a CCACCA at the 3' terminus of unstable tRNAs. While stable tRNAs receive only 3'-terminal CCA, unstable tRNAs are marked with CCACCA and rapidly degraded. The polypeptide is CCA-adding enzyme (Lactiplantibacillus plantarum (strain ATCC BAA-793 / NCIMB 8826 / WCFS1) (Lactobacillus plantarum)).